Reading from the N-terminus, the 225-residue chain is UPF0758 protein Shew185_0376 (225 aa).

Positions Val102–Ile224 constitute an MPN domain. Residues His173, His175, and Asp186 each contribute to the Zn(2+) site. Residues His173–Asp186 carry the JAMM motif motif.

Belongs to the UPF0758 family.

The sequence is that of UPF0758 protein Shew185_0376 from Shewanella baltica (strain OS185).